Here is a 275-residue protein sequence, read N- to C-terminus: Testis-specific gene 13 protein (275 aa).

Positions 1 to 20 (MSQKRQTKFQNGKSKTSENS) are enriched in polar residues. The tract at residues 1 to 28 (MSQKRQTKFQNGKSKTSENSSAKREKGM) is disordered.

As to expression, testis-specific.

The chain is Testis-specific gene 13 protein (TSGA13) from Homo sapiens (Human).